A 492-amino-acid polypeptide reads, in one-letter code: 3,6-anhydro-alpha-L-galactose dehydrogenase (492 aa).

NADP(+) is bound by residues 160–161, 184–187, and 237–238; these read WN, KPSE, and GS. Glutamate 259 serves as the catalytic Proton acceptor. Leucine 260 contacts NADP(+). Residue cysteine 293 is the Nucleophile of the active site. Residue glutamate 394 participates in NADP(+) binding.

Belongs to the aldehyde dehydrogenase family.

The catalysed reaction is 3,6-anhydro-alpha-L-galactopyranose + NADP(+) + H2O = 3,6-anhydro-L-galactonate + NADPH + 2 H(+). Its activity is regulated as follows. Significantly inhibited by EDTA. Activity is enhanced by Fe(2+), but is strongly inhibited by Mn(2+), Cu(2+), Zn(2+), Ni(2+) and Co(2+). Involved in the degradation of 3,6-anhydro-L-galactose, which is the major monomeric sugar of red macroalgae. Catalyzes the oxidation of 3,6-anhydro-L-galactose (AHG) to form 3,6-anhydrogalactonate (AHGA). Shows broad substrate specificity, with maximum activity toward AHG. The enzyme activities toward D-fructose, D-galactose and D-ribose are between 40% and 50% of the maximum, but those toward L-rhamnose, L-glyceraldehyde, D-glyceraldehyde, L-fucose and D-glucose are much lower. The chain is 3,6-anhydro-alpha-L-galactose dehydrogenase from Streptomyces coelicolor (strain ATCC BAA-471 / A3(2) / M145).